We begin with the raw amino-acid sequence, 453 residues long: Alpha-2B adrenergic receptor (453 aa).

The Extracellular segment spans residues 1 to 17 (MSGPAMVHQEPYSVQAT). The helical transmembrane segment at 18-42 (AAIASAITFLILFTIFGNALVILAV) threads the bilayer. Over 43–54 (LTSRSLRAPQNL) the chain is Cytoplasmic. The chain crosses the membrane as a helical span at residues 55–80 (FLVSLAAADILVATLIIPFSLANELL). The Extracellular portion of the chain corresponds to 81 to 90 (GYWYFWRAWC). A disulfide bond links Cys-90 and Cys-169. Residues 91-113 (EVYLALDVLFCTSSIVHLCAISL) form a helical membrane-spanning segment. At 114–135 (DRYWAVSRALEYNSKRTPRRIK) the chain is on the cytoplasmic side. The helical transmembrane segment at 136 to 158 (CIILTVWLIAAVISLPPLIYKGD) threads the bilayer. The Extracellular segment spans residues 159–174 (QRPEPHGLPQCELNQE). The helical transmembrane segment at 175-198 (AWYILASSIGSFFAPCLIMILVYL) threads the bilayer. The Cytoplasmic portion of the chain corresponds to 199–375 (RIYVIAKRSH…LSREKRFTFV (177 aa)). Residues 214-329 (AKRGSGEGES…ASPASVFNPP (116 aa)) are disordered. A compositionally biased stretch (acidic residues) spans 303–314 (AEEDEEEVEECE). The helical transmembrane segment at 376–399 (LAVVIGVFVVCWFPFFFSYSLGAI) threads the bilayer. The Extracellular portion of the chain corresponds to 400–408 (CPQHCKVPH). Residues 409-432 (GLFQFFFWIGYCNSSLNPVIYTIF) form a helical membrane-spanning segment. Topologically, residues 433–453 (NQDFRRAFRRILCRQWTQTGW) are cytoplasmic. Residue Cys-445 is the site of S-palmitoyl cysteine attachment.

Belongs to the G-protein coupled receptor 1 family. Adrenergic receptor subfamily. ADRA2B sub-subfamily. Interacts with RAB26. Interacts with PPP1R9B. Interacts with GGA1, GGA2 and GGA3.

Its subcellular location is the cell membrane. Functionally, alpha-2 adrenergic receptors mediate the catecholamine-induced inhibition of adenylate cyclase through the action of G proteins. The polypeptide is Alpha-2B adrenergic receptor (Adra2b) (Mus musculus (Mouse)).